Here is a 366-residue protein sequence, read N- to C-terminus: Chorismate synthase (366 aa).

Arg48 contacts NADP(+). FMN is bound by residues Arg125–Ser127, Asn241–Ala242, Gly285, Lys300–Ser304, and Arg326.

The protein belongs to the chorismate synthase family. Homotetramer. The cofactor is FMNH2.

The enzyme catalyses 5-O-(1-carboxyvinyl)-3-phosphoshikimate = chorismate + phosphate. It functions in the pathway metabolic intermediate biosynthesis; chorismate biosynthesis; chorismate from D-erythrose 4-phosphate and phosphoenolpyruvate: step 7/7. Its function is as follows. Catalyzes the anti-1,4-elimination of the C-3 phosphate and the C-6 proR hydrogen from 5-enolpyruvylshikimate-3-phosphate (EPSP) to yield chorismate, which is the branch point compound that serves as the starting substrate for the three terminal pathways of aromatic amino acid biosynthesis. This reaction introduces a second double bond into the aromatic ring system. The protein is Chorismate synthase of Paracoccus denitrificans (strain Pd 1222).